Consider the following 439-residue polypeptide: Tryptophan synthase beta chain 2 (439 aa).

Lys-99 is subject to N6-(pyridoxal phosphate)lysine.

The protein belongs to the TrpB family. As to quaternary structure, tetramer of two alpha and two beta chains. Requires pyridoxal 5'-phosphate as cofactor.

It carries out the reaction (1S,2R)-1-C-(indol-3-yl)glycerol 3-phosphate + L-serine = D-glyceraldehyde 3-phosphate + L-tryptophan + H2O. The protein operates within amino-acid biosynthesis; L-tryptophan biosynthesis; L-tryptophan from chorismate: step 5/5. Its function is as follows. The beta subunit is responsible for the synthesis of L-tryptophan from indole and L-serine. This Corynebacterium efficiens (strain DSM 44549 / YS-314 / AJ 12310 / JCM 11189 / NBRC 100395) protein is Tryptophan synthase beta chain 2 (trpB2).